We begin with the raw amino-acid sequence, 443 residues long: 3-ketoacyl-CoA thiolase 1, peroxisomal (443 aa).

The transit peptide at M1 to C30 directs the protein to the peroxisome. C130 (acyl-thioester intermediate) is an active-site residue. Catalysis depends on proton acceptor residues H385 and C417.

It belongs to the thiolase-like superfamily. Thiolase family. As to quaternary structure, homodimer. Low levels in seedlings and leaves.

The protein resides in the peroxisome. It catalyses the reaction an acyl-CoA + acetyl-CoA = a 3-oxoacyl-CoA + CoA. Its pathway is lipid metabolism; fatty acid metabolism. Involved in fatty-acid beta-oxidation prior to gluconeogenesis during germination and subsequent seedling growth. Implicated in jasmonic acid (JA) biosynthesis. The chain is 3-ketoacyl-CoA thiolase 1, peroxisomal (KAT1) from Arabidopsis thaliana (Mouse-ear cress).